A 184-amino-acid polypeptide reads, in one-letter code: ATP synthase subunit b, chloroplastic (184 aa).

Residues 27 to 49 (LATNPINLSVVLGVLIFFGKGVL) form a helical membrane-spanning segment.

Belongs to the ATPase B chain family. As to quaternary structure, F-type ATPases have 2 components, F(1) - the catalytic core - and F(0) - the membrane proton channel. F(1) has five subunits: alpha(3), beta(3), gamma(1), delta(1), epsilon(1). F(0) has four main subunits: a(1), b(1), b'(1) and c(10-14). The alpha and beta chains form an alternating ring which encloses part of the gamma chain. F(1) is attached to F(0) by a central stalk formed by the gamma and epsilon chains, while a peripheral stalk is formed by the delta, b and b' chains.

Its subcellular location is the plastid. It is found in the chloroplast thylakoid membrane. Its function is as follows. F(1)F(0) ATP synthase produces ATP from ADP in the presence of a proton or sodium gradient. F-type ATPases consist of two structural domains, F(1) containing the extramembraneous catalytic core and F(0) containing the membrane proton channel, linked together by a central stalk and a peripheral stalk. During catalysis, ATP synthesis in the catalytic domain of F(1) is coupled via a rotary mechanism of the central stalk subunits to proton translocation. In terms of biological role, component of the F(0) channel, it forms part of the peripheral stalk, linking F(1) to F(0). In Cucumis sativus (Cucumber), this protein is ATP synthase subunit b, chloroplastic.